Reading from the N-terminus, the 270-residue chain is Ribonuclease HII (270 aa).

The RNase H type-2 domain occupies 84–270; it reads RYIAGVDEVG…HRNSFLTKLL (187 aa). Positions 90, 91, and 186 each coordinate a divalent metal cation.

This sequence belongs to the RNase HII family. Mn(2+) serves as cofactor. The cofactor is Mg(2+).

The protein localises to the cytoplasm. The catalysed reaction is Endonucleolytic cleavage to 5'-phosphomonoester.. In terms of biological role, endonuclease that specifically degrades the RNA of RNA-DNA hybrids. This Clostridium beijerinckii (strain ATCC 51743 / NCIMB 8052) (Clostridium acetobutylicum) protein is Ribonuclease HII.